Consider the following 427-residue polypeptide: 3-phosphoshikimate 1-carboxyvinyltransferase (427 aa).

The 3-phosphoshikimate site is built by K20, S21, and R25. K20 is a binding site for phosphoenolpyruvate. Positions 92 and 120 each coordinate phosphoenolpyruvate. Residues S166, Q168, D312, and K339 each contribute to the 3-phosphoshikimate site. Phosphoenolpyruvate is bound at residue Q168. D312 (proton acceptor) is an active-site residue. 2 residues coordinate phosphoenolpyruvate: R343 and R385.

Belongs to the EPSP synthase family. As to quaternary structure, monomer.

The protein resides in the cytoplasm. The enzyme catalyses 3-phosphoshikimate + phosphoenolpyruvate = 5-O-(1-carboxyvinyl)-3-phosphoshikimate + phosphate. It participates in metabolic intermediate biosynthesis; chorismate biosynthesis; chorismate from D-erythrose 4-phosphate and phosphoenolpyruvate: step 6/7. In terms of biological role, catalyzes the transfer of the enolpyruvyl moiety of phosphoenolpyruvate (PEP) to the 5-hydroxyl of shikimate-3-phosphate (S3P) to produce enolpyruvyl shikimate-3-phosphate and inorganic phosphate. This Streptococcus agalactiae serotype Ia (strain ATCC 27591 / A909 / CDC SS700) protein is 3-phosphoshikimate 1-carboxyvinyltransferase.